Consider the following 662-residue polypeptide: Glycogen debranching enzyme (662 aa).

Asp338 (nucleophile) is an active-site residue. Glu373 functions as the Proton donor in the catalytic mechanism.

This sequence belongs to the glycosyl hydrolase 13 family.

The catalysed reaction is Hydrolysis of (1-&gt;6)-alpha-D-glucosidic linkages to branches with degrees of polymerization of three or four glucose residues in limit dextrin.. Its pathway is glycan degradation; glycogen degradation. Its function is as follows. Removes maltotriose and maltotetraose chains that are attached by 1,6-alpha-linkage to the limit dextrin main chain, generating a debranched limit dextrin. This is Glycogen debranching enzyme from Yersinia pseudotuberculosis serotype IB (strain PB1/+).